The sequence spans 234 residues: tRNA1(Val) (adenine(37)-N6)-methyltransferase (234 aa).

Belongs to the methyltransferase superfamily. tRNA (adenine-N(6)-)-methyltransferase family.

Its subcellular location is the cytoplasm. It catalyses the reaction adenosine(37) in tRNA1(Val) + S-adenosyl-L-methionine = N(6)-methyladenosine(37) in tRNA1(Val) + S-adenosyl-L-homocysteine + H(+). Specifically methylates the adenine in position 37 of tRNA(1)(Val) (anticodon cmo5UAC). The protein is tRNA1(Val) (adenine(37)-N6)-methyltransferase of Flavobacterium psychrophilum (strain ATCC 49511 / DSM 21280 / CIP 103535 / JIP02/86).